Here is a 396-residue protein sequence, read N- to C-terminus: Phosphoglycerate kinase (396 aa).

Residues 21-23 (DLN), arginine 36, 59-62 (HFGR), arginine 118, and arginine 151 contribute to the substrate site. Residues lysine 201, glutamate 323, and 353–356 (GGDT) each bind ATP.

Belongs to the phosphoglycerate kinase family. Monomer.

It localises to the cytoplasm. The catalysed reaction is (2R)-3-phosphoglycerate + ATP = (2R)-3-phospho-glyceroyl phosphate + ADP. Its pathway is carbohydrate degradation; glycolysis; pyruvate from D-glyceraldehyde 3-phosphate: step 2/5. The protein is Phosphoglycerate kinase of Brucella melitensis biotype 1 (strain ATCC 23456 / CCUG 17765 / NCTC 10094 / 16M).